We begin with the raw amino-acid sequence, 473 residues long: Photosystem II CP43 reaction center protein (473 aa).

Positions 1 to 14 (MKILYSLRRFYHVE) are excised as a propeptide. N-acetylthreonine is present on Thr-15. Thr-15 bears the Phosphothreonine mark. 5 helical membrane-spanning segments follow: residues 69–93 (LFEV…PHLA), 134–155 (LLGP…KDRN), 178–200 (KALY…RKIT), 255–275 (KPFA…LSYS), and 291–312 (WFNN…ASQA). [CaMn4O5] cluster is bound at residue Glu-367. The chain crosses the membrane as a helical span at residues 447–471 (RARAAAAGFEKGIDRDLEPVLYMNP).

Belongs to the PsbB/PsbC family. PsbC subfamily. As to quaternary structure, PSII is composed of 1 copy each of membrane proteins PsbA, PsbB, PsbC, PsbD, PsbE, PsbF, PsbH, PsbI, PsbJ, PsbK, PsbL, PsbM, PsbT, PsbX, PsbY, PsbZ, Psb30/Ycf12, at least 3 peripheral proteins of the oxygen-evolving complex and a large number of cofactors. It forms dimeric complexes. The cofactor is Binds multiple chlorophylls and provides some of the ligands for the Ca-4Mn-5O cluster of the oxygen-evolving complex. It may also provide a ligand for a Cl- that is required for oxygen evolution. PSII binds additional chlorophylls, carotenoids and specific lipids..

Its subcellular location is the plastid. It localises to the chloroplast thylakoid membrane. In terms of biological role, one of the components of the core complex of photosystem II (PSII). It binds chlorophyll and helps catalyze the primary light-induced photochemical processes of PSII. PSII is a light-driven water:plastoquinone oxidoreductase, using light energy to abstract electrons from H(2)O, generating O(2) and a proton gradient subsequently used for ATP formation. The polypeptide is Photosystem II CP43 reaction center protein (Hordeum vulgare (Barley)).